We begin with the raw amino-acid sequence, 249 residues long: Proteasome subunit alpha 2 (249 aa).

At M1 the chain carries N-acetylmethionine.

The protein belongs to the peptidase T1A family. The 20S proteasome core is composed of 14 alpha and 14 beta subunits that assemble into four stacked heptameric rings, resulting in a barrel-shaped structure. The two inner rings, each composed of seven catalytic beta subunits, are sandwiched by two outer rings, each composed of seven alpha subunits. H.volcanii produces at least 2 types of 20S proteasomes: an alpha1-beta proteasome and a proteasome containing all three subunits (alpha1, alpha2, and beta) that appears to be asymmetrical with homo-oligomeric alpha1 and alpha2 rings positioned on separate ends. The catalytic chamber with the active sites is on the inside of the barrel. Has probably a gated structure, the ends of the cylinder being occluded by the N-termini of the alpha-subunits. Is likely capped at one or both ends by the proteasome regulatory ATPase, PAN.

It localises to the cytoplasm. Its activity is regulated as follows. The formation of the proteasomal ATPase PAN-20S proteasome complex, via the docking of the C-termini of PAN into the intersubunit pockets in the alpha-rings, triggers opening of the gate for substrate entry. Interconversion between the open-gate and close-gate conformations leads to a dynamic regulation of the 20S proteasome proteolysis activity. In terms of biological role, component of the proteasome core, a large protease complex with broad specificity involved in protein degradation. The H.volcanii alpha1-beta-alpha2 proteasome is able to cleave oligopeptides after Tyr and thus displays chymotrypsin-like activity. The chain is Proteasome subunit alpha 2 from Haloferax volcanii (strain ATCC 29605 / DSM 3757 / JCM 8879 / NBRC 14742 / NCIMB 2012 / VKM B-1768 / DS2) (Halobacterium volcanii).